Reading from the N-terminus, the 211-residue chain is Intermembrane phospholipid transport system binding protein MlaC (211 aa).

An N-terminal signal peptide occupies residues 1-21; it reads MFKRLMMVALLVIAPLSAATA.

The protein belongs to the MlaC/ttg2D family. In terms of assembly, interacts with the MlaA-OmpF outer membrane complex and with the inner membrane ABC transporter complex MlaFEDB, via direct interaction with MlaD.

The protein resides in the periplasm. Its function is as follows. Involved in a phospholipid transport pathway that maintains lipid asymmetry in the outer membrane by retrograde trafficking of phospholipids from the outer membrane to the inner membrane. May transfer phospholipid across the periplasmic space and deliver it to the MlaFEDB complex at the inner membrane. This is Intermembrane phospholipid transport system binding protein MlaC from Escherichia coli (strain K12).